The sequence spans 238 residues: ATP synthase subunit a (238 aa).

Transmembrane regions (helical) follow at residues 15–35 (IFNLTMLAMTLLIVGVIFVFI), 76–96 (YSLFFLCLFLFMVIANNLGLM), 111–131 (PTANLQYDLTLSFLVILLTHI), 167–187 (LALRIFGNIFAGEVMTSLLLL), and 208–230 (AFSVFISCIQAYVFTLLTSVYLG).

Belongs to the ATPase A chain family. As to quaternary structure, F-type ATPases have 2 components, CF(1) - the catalytic core - and CF(0) - the membrane proton channel. CF(1) has five subunits: alpha(3), beta(3), gamma(1), delta(1), epsilon(1). CF(0) has three main subunits: a(1), b(2) and c(9-12). The alpha and beta chains form an alternating ring which encloses part of the gamma chain. CF(1) is attached to CF(0) by a central stalk formed by the gamma and epsilon chains, while a peripheral stalk is formed by the delta and b chains.

It is found in the cell membrane. In terms of biological role, key component of the proton channel; it plays a direct role in the translocation of protons across the membrane. The chain is ATP synthase subunit a from Streptococcus pneumoniae (strain ATCC BAA-255 / R6).